Consider the following 370-residue polypeptide: MTATSSHGARLTIDLGALAANWRRLAAEAAGAECAAVIKADAYGCGIAQVAPALWDAGCRTFFVAHLSEAERTRAVLSDATIYVLNGFPPGSAPAYRAMGFRPVLGSRSEIAEWAQACRSLGERLPAALHVDTGMNRLGLNPAEAIDLAGDAVLGAFQPTLLMSHLVSAEVPGDAITARQIAEFARVRMAYPALPASLANSAGIFLGKAARHEIVRPGYALYGGNPTPERENPMRPVVRLEAAILQLREVAAGETAGYNARWTAPGPRLLATLSLGYADGYPRAGSGRAEALVGGVRCPFVGTISMDLVILDVTQAPPEAVRRGAPVVLIGDGLTLDEVGQRAGTIGYEILTNLGSRYDRHYIEGSSLSA.

The active-site Proton acceptor; specific for D-alanine is the K39. K39 bears the N6-(pyridoxal phosphate)lysine mark. R137 is a binding site for substrate. Y258 acts as the Proton acceptor; specific for L-alanine in catalysis. Position 306 (M306) interacts with substrate.

It belongs to the alanine racemase family. Requires pyridoxal 5'-phosphate as cofactor.

It carries out the reaction L-alanine = D-alanine. It functions in the pathway amino-acid biosynthesis; D-alanine biosynthesis; D-alanine from L-alanine: step 1/1. Catalyzes the interconversion of L-alanine and D-alanine. May also act on other amino acids. The sequence is that of Alanine racemase (alr) from Methylobacterium nodulans (strain LMG 21967 / CNCM I-2342 / ORS 2060).